We begin with the raw amino-acid sequence, 434 residues long: Phosphomethylpyrimidine synthase 2 (434 aa).

Residues methionine 94, tyrosine 123, histidine 162, 184 to 186 (SRG), 225 to 228 (NAMR), and glutamate 264 contribute to the substrate site. Histidine 268 provides a ligand contact to Zn(2+). Tyrosine 291 is a binding site for substrate. Histidine 332 contacts Zn(2+). Residues cysteine 408, cysteine 411, and cysteine 415 each coordinate [4Fe-4S] cluster.

The protein belongs to the ThiC family. [4Fe-4S] cluster serves as cofactor.

It catalyses the reaction 5-amino-1-(5-phospho-beta-D-ribosyl)imidazole + S-adenosyl-L-methionine = 4-amino-2-methyl-5-(phosphooxymethyl)pyrimidine + CO + 5'-deoxyadenosine + formate + L-methionine + 3 H(+). Its pathway is cofactor biosynthesis; thiamine diphosphate biosynthesis. Its function is as follows. Catalyzes the synthesis of the hydroxymethylpyrimidine phosphate (HMP-P) moiety of thiamine from aminoimidazole ribotide (AIR) in a radical S-adenosyl-L-methionine (SAM)-dependent reaction. The polypeptide is Phosphomethylpyrimidine synthase 2 (Methanosphaera stadtmanae (strain ATCC 43021 / DSM 3091 / JCM 11832 / MCB-3)).